A 46-amino-acid chain; its full sequence is Iota-conotoxin RXIA (46 aa).

Residues Pro-2 and Pro-11 each carry the 4-hydroxyproline; partial modification. Cystine bridges form between Cys-5–Cys-19, Cys-12–Cys-22, Cys-18–Cys-27, and Cys-21–Cys-38. Residue Pro-29 is modified to 4-hydroxyproline. Phe-44 carries the D-phenylalanine modification.

The protein belongs to the conotoxin I1 superfamily. The natural D-Phe-44 form of the peptide is more potent than the L-Phe-44 form. As to expression, expressed by the venom duct.

It is found in the secreted. In terms of biological role, iota-conotoxins bind to voltage-gated sodium channels and act as agonists by shifting the voltage-dependence of activation to more hyperpolarized levels. This toxin acts on Nav1.6/SCN8A &gt; Nav1.2/SCN2A &gt; Nav1.7/SCN9A sodium channels. Produces general excitatory symptoms upon intracorporeal injection and repetitive action potentials in the frog cutaneous pectoris muscle. Natural peptide (with D-Phe) is active on nerve, but not on muscle. Synthetic peptide (with L-Phe) is not active on both nerve and muscle. The protein is Iota-conotoxin RXIA of Conus radiatus (Rayed cone).